The sequence spans 435 residues: 3-phosphoshikimate 1-carboxyvinyltransferase (435 aa).

3-phosphoshikimate-binding residues include Lys23, Ser24, and Arg28. Lys23 provides a ligand contact to phosphoenolpyruvate. Positions 96 and 124 each coordinate phosphoenolpyruvate. 3-phosphoshikimate is bound by residues Ser167, Ser168, Gln169, Ser196, Glu311, and His340. Gln169 contacts phosphoenolpyruvate. Residue Glu311 is the Proton acceptor of the active site. Phosphoenolpyruvate is bound by residues Arg344, Arg385, and Lys410.

Belongs to the EPSP synthase family. As to quaternary structure, monomer.

It localises to the cytoplasm. The enzyme catalyses 3-phosphoshikimate + phosphoenolpyruvate = 5-O-(1-carboxyvinyl)-3-phosphoshikimate + phosphate. It functions in the pathway metabolic intermediate biosynthesis; chorismate biosynthesis; chorismate from D-erythrose 4-phosphate and phosphoenolpyruvate: step 6/7. Functionally, catalyzes the transfer of the enolpyruvyl moiety of phosphoenolpyruvate (PEP) to the 5-hydroxyl of shikimate-3-phosphate (S3P) to produce enolpyruvyl shikimate-3-phosphate and inorganic phosphate. This is 3-phosphoshikimate 1-carboxyvinyltransferase from Mycolicibacterium paratuberculosis (strain ATCC BAA-968 / K-10) (Mycobacterium paratuberculosis).